Here is a 1779-residue protein sequence, read N- to C-terminus: 6-methylsalicylic acid synthase (1779 aa).

A compositionally biased stretch (polar residues) spans methionine 1 to serine 11. The segment at methionine 1–glycine 40 is disordered. A compositionally biased stretch (basic and acidic residues) spans glutamate 31–glycine 40. Positions leucine 43–alanine 472 constitute a Ketosynthase family 3 (KS3) domain. Catalysis depends on for beta-ketoacyl synthase activity residues cysteine 215, histidine 350, and histidine 392. The tract at residues tryptophan 586–alanine 883 is malonyl-CoA:ACP transacylase (MAT) domain. Serine 672 serves as the catalytic For acyl/malonyl transferase activity. The product template (PT) domain stretch occupies residues threonine 942–phenylalanine 1218. The segment at asparagine 948–proline 1064 is N-terminal hotdog fold. One can recognise a PKS/mFAS DH domain in the interval asparagine 948–serine 1219. Histidine 980 serves as the catalytic Proton acceptor; for dehydratase activity. The C-terminal hotdog fold stretch occupies residues proline 1079–serine 1219. Aspartate 1138 (proton donor; for dehydratase activity) is an active-site residue. Positions glutamine 1703–leucine 1777 constitute a Carrier domain. An O-(pantetheine 4'-phosphoryl)serine modification is found at serine 1737.

It catalyses the reaction 3 malonyl-CoA + acetyl-CoA + NADPH + 3 H(+) = 6-methylsalicylate + 3 CO2 + NADP(+) + 4 CoA + H2O. Its pathway is secondary metabolite biosynthesis; terpenoid biosynthesis. In terms of biological role, non-reducing polyketide synthase; part of the gene cluster that mediates the biosynthesis of yanuthone D, a fungal isoprenoid epoxycyclohexenone that acts as an antibiotic against fungi and bacteria. The first step of the pathway is the synthesis of 6-methylsalicylic acid (6-MSA) by the polyketide synthase yanA. 6-MSA is then converted to m-cresol by the decarboxylase yanB. The cytochrome P450 monooxygenase yanC then catalyzes the oxidation of m-cresol to toluquinol. Epoxidation of toluquinol is then performed by the short chain dehydrogenase yanD, with the help of yanE, and a further prenylation by yanG leads to 7-deacetoxyyanuthone A. The next step is the hydroxylation of C-22 of 7-deacetoxyyanuthone A by the cytochrome P450 monooxygenase yanH to yield 22-deacetylyanuthone A. O-Mevalon transferase yanI then attaches mevalon to the hydroxyl group of 22-deacetylyanuthone A to produce yanuthone E. Finally, the FAD-dependent monooxygenase yanF oxidizes the hydroxyl group at C15 of yanuthone E to form yanuthone D. Furthermore, several branching points in the pathway lead to the production of yanuthones F and G from 7-deacetoxyyanuthone A; yanuthones H and I from 22-deacetylyanuthone A; and yanuthone J from yanuthone E. The sequence is that of 6-methylsalicylic acid synthase from Aspergillus niger (strain ATCC 1015 / CBS 113.46 / FGSC A1144 / LSHB Ac4 / NCTC 3858a / NRRL 328 / USDA 3528.7).